The primary structure comprises 86 residues: Cell division topological specificity factor (86 aa).

The protein belongs to the MinE family.

Prevents the cell division inhibition by proteins MinC and MinD at internal division sites while permitting inhibition at polar sites. This ensures cell division at the proper site by restricting the formation of a division septum at the midpoint of the long axis of the cell. This chain is Cell division topological specificity factor, found in Rhizobium rhizogenes (strain K84 / ATCC BAA-868) (Agrobacterium radiobacter).